A 198-amino-acid polypeptide reads, in one-letter code: Ribonuclease HII (198 aa).

Residues 10–198 (HLVAGVDEVG…PVRRALGIAS (189 aa)) enclose the RNase H type-2 domain. Residues Asp-16, Glu-17, and Asp-108 each coordinate a divalent metal cation.

The protein belongs to the RNase HII family. It depends on Mn(2+) as a cofactor. The cofactor is Mg(2+).

It is found in the cytoplasm. It catalyses the reaction Endonucleolytic cleavage to 5'-phosphomonoester.. Its function is as follows. Endonuclease that specifically degrades the RNA of RNA-DNA hybrids. This is Ribonuclease HII from Cronobacter sakazakii (strain ATCC BAA-894) (Enterobacter sakazakii).